A 223-amino-acid chain; its full sequence is 2-C-methyl-D-erythritol 4-phosphate cytidylyltransferase (223 aa).

Belongs to the IspD/TarI cytidylyltransferase family. IspD subfamily.

It catalyses the reaction 2-C-methyl-D-erythritol 4-phosphate + CTP + H(+) = 4-CDP-2-C-methyl-D-erythritol + diphosphate. The protein operates within isoprenoid biosynthesis; isopentenyl diphosphate biosynthesis via DXP pathway; isopentenyl diphosphate from 1-deoxy-D-xylulose 5-phosphate: step 2/6. In terms of biological role, catalyzes the formation of 4-diphosphocytidyl-2-C-methyl-D-erythritol from CTP and 2-C-methyl-D-erythritol 4-phosphate (MEP). In Prochlorococcus marinus subsp. pastoris (strain CCMP1986 / NIES-2087 / MED4), this protein is 2-C-methyl-D-erythritol 4-phosphate cytidylyltransferase.